The chain runs to 174 residues: NADH-ubiquinone oxidoreductase chain 6 (174 aa).

Helical transmembrane passes span 25 to 45 (SMGL…GIYV), 48 to 68 (FWFS…LFIY), 82 to 102 (FKLT…FFIL), and 143 to 163 (LITL…VKIT).

The protein belongs to the complex I subunit 6 family.

The protein localises to the mitochondrion membrane. It catalyses the reaction a ubiquinone + NADH + 5 H(+)(in) = a ubiquinol + NAD(+) + 4 H(+)(out). In terms of biological role, core subunit of the mitochondrial membrane respiratory chain NADH dehydrogenase (Complex I) that is believed to belong to the minimal assembly required for catalysis. Complex I functions in the transfer of electrons from NADH to the respiratory chain. The immediate electron acceptor for the enzyme is believed to be ubiquinone. The chain is NADH-ubiquinone oxidoreductase chain 6 (mt:ND6) from Anopheles gambiae (African malaria mosquito).